The following is a 316-amino-acid chain: Ribosomal RNA large subunit methyltransferase F (316 aa).

This sequence belongs to the methyltransferase superfamily. METTL16/RlmF family.

It is found in the cytoplasm. The catalysed reaction is adenosine(1618) in 23S rRNA + S-adenosyl-L-methionine = N(6)-methyladenosine(1618) in 23S rRNA + S-adenosyl-L-homocysteine + H(+). Specifically methylates the adenine in position 1618 of 23S rRNA. The sequence is that of Ribosomal RNA large subunit methyltransferase F from Pseudomonas putida (strain GB-1).